A 121-amino-acid polypeptide reads, in one-letter code: MKWWKLSGQILLLFCFAWTGEWIAKQAHLPVPGSIIGIFLLLISLKFNLVKKEWIQDGADFLLKELILFFIPSAVAVIRYKDTLSQYGIDLILIIMISTLCVTLVTGLLTELLLKRKGSVQ.

4 consecutive transmembrane segments (helical) span residues 3 to 23, 30 to 50, 58 to 78, and 89 to 109; these read WWKL…GEWI, PVPG…FNLV, GADF…VAVI, and IDLI…TGLL.

It belongs to the CidA/LrgA family. CidA subfamily.

Its subcellular location is the cell membrane. Its function is as follows. Increases the activity of extracellular murein hydrolases possibly by mediating their export via hole formation. Inhibited by the antiholin-like proteins LrgAB. In an unstressed cell, the LrgAB products probably inhibit the function of the CidA protein. When a cell is stressed by the addition of antibiotics or by other factors in the environment, CidA possibly oligomerizes within the bacterial cell membrane, creating lesions that disrupt the proton motive force, which in turn results in loss of cell viability. These lesions are also hypothesized to regulate the subsequent cell lysis by either allowing the murein hydrolases access to the cell wall substrate and/or regulating their activity by a possible change in the cell wall pH that results from loss of membrane potential. In Bacillus cereus (strain ATCC 10987 / NRS 248), this protein is Holin-like protein CidA.